Consider the following 227-residue polypeptide: Enolase-phosphatase E1 (227 aa).

The protein belongs to the HAD-like hydrolase superfamily. MasA/MtnC family. Monomer. Mg(2+) serves as cofactor.

It catalyses the reaction 5-methylsulfanyl-2,3-dioxopentyl phosphate + H2O = 1,2-dihydroxy-5-(methylsulfanyl)pent-1-en-3-one + phosphate. Its pathway is amino-acid biosynthesis; L-methionine biosynthesis via salvage pathway; L-methionine from S-methyl-5-thio-alpha-D-ribose 1-phosphate: step 3/6. The protein operates within amino-acid biosynthesis; L-methionine biosynthesis via salvage pathway; L-methionine from S-methyl-5-thio-alpha-D-ribose 1-phosphate: step 4/6. Functionally, bifunctional enzyme that catalyzes the enolization of 2,3-diketo-5-methylthiopentyl-1-phosphate (DK-MTP-1-P) into the intermediate 2-hydroxy-3-keto-5-methylthiopentenyl-1-phosphate (HK-MTPenyl-1-P), which is then dephosphorylated to form the acireductone 1,2-dihydroxy-3-keto-5-methylthiopentene (DHK-MTPene). This is Enolase-phosphatase E1 from Pseudomonas syringae pv. tomato (strain ATCC BAA-871 / DC3000).